Here is an 818-residue protein sequence, read N- to C-terminus: Elongation factor G, mitochondrial (818 aa).

A mitochondrion-targeting transit peptide spans 1–23 (MFLGRAASRTCRHSQPLRVAARA). A disordered region spans residues 67 to 96 (MASTATATKPTEEASSSDQPPAPAHKLTDN). Positions 69 to 85 (STATATKPTEEASSSDQ) are enriched in polar residues. The region spanning 102-390 (TFQRNIGISA…GVCEYLPNPS (289 aa)) is the tr-type G domain. GTP is bound by residues 111–118 (AHIDSGKT), 188–192 (DTPGH), and 242–245 (NKMD).

This sequence belongs to the TRAFAC class translation factor GTPase superfamily. Classic translation factor GTPase family. EF-G/EF-2 subfamily.

It localises to the mitochondrion. It functions in the pathway protein biosynthesis; polypeptide chain elongation. Its function is as follows. Mitochondrial GTPase that catalyzes the GTP-dependent ribosomal translocation step during translation elongation. During this step, the ribosome changes from the pre-translocational (PRE) to the post-translocational (POST) state as the newly formed A-site-bound peptidyl-tRNA and P-site-bound deacylated tRNA move to the P and E sites, respectively. Catalyzes the coordinated movement of the two tRNA molecules, the mRNA and conformational changes in the ribosome. The sequence is that of Elongation factor G, mitochondrial from Coprinopsis cinerea (strain Okayama-7 / 130 / ATCC MYA-4618 / FGSC 9003) (Inky cap fungus).